Here is a 185-residue protein sequence, read N- to C-terminus: Ribosome-recycling factor (185 aa).

It belongs to the RRF family.

It localises to the cytoplasm. In terms of biological role, responsible for the release of ribosomes from messenger RNA at the termination of protein biosynthesis. May increase the efficiency of translation by recycling ribosomes from one round of translation to another. The protein is Ribosome-recycling factor of Syntrophobacter fumaroxidans (strain DSM 10017 / MPOB).